The chain runs to 419 residues: GTPase Obg (419 aa).

Residues M1–I156 enclose the Obg domain. In terms of domain architecture, OBG-type G spans A157–E325. Residues G163 to S170, F188 to A192, D209 to G212, N279 to D282, and S306 to A308 each bind GTP. S170 and T190 together coordinate Mg(2+). The OCT domain occupies K342–K419.

It belongs to the TRAFAC class OBG-HflX-like GTPase superfamily. OBG GTPase family. As to quaternary structure, monomer. It depends on Mg(2+) as a cofactor.

It is found in the cytoplasm. An essential GTPase which binds GTP, GDP and possibly (p)ppGpp with moderate affinity, with high nucleotide exchange rates and a fairly low GTP hydrolysis rate. Plays a role in control of the cell cycle, stress response, ribosome biogenesis and in those bacteria that undergo differentiation, in morphogenesis control. This chain is GTPase Obg, found in Endomicrobium trichonymphae.